The primary structure comprises 62 residues: Omega-lycotoxin-Am1e (62 aa).

A propeptide spanning residues E1–R15 is cleaved from the precursor. Intrachain disulfides connect C19–C34, C26–C39, C33–C59, and C41–C57.

Belongs to the neurotoxin omega-lctx family. In terms of tissue distribution, expressed by the venom gland.

The protein resides in the secreted. Its function is as follows. Modulates Cav2.1/CACNA1A voltage-gated calcium channels (P/Q-type currents) in rat cerebellar Purkinje cells and hippocampal CA1-CA3 neurons. At saturating concentrations (&gt;10 nM) decelerates activation kinetics and slightly increases peak amplitude without affecting deactivation kinetics. In vivo, does not cause death when intravenously injected into mice. In rat models, through its activity on Cav2.1/CACNA1A, has an ameliorative effect on memory defects provoked by hyperstimulation of N-methyl-D-aspartate receptors (NMDARs) in the hippocampus. The sequence is that of Omega-lycotoxin-Am1e from Alopecosa marikovskyi (Wolf spider).